A 75-amino-acid polypeptide reads, in one-letter code: Transcription attenuation protein MtrB (75 aa).

Belongs to the MtrB family. As to quaternary structure, oligomer of 11 identical subunits arranged in doughnut-like structure.

Required for transcription attenuation control in the Trp operon. This trans-acting factor seems to recognize a 10 bases nucleotide sequence in the Trp leader transcript causing transcription termination. Binds the leader RNA only in presence of L-tryptophan. The polypeptide is Transcription attenuation protein MtrB (Bacillus velezensis (strain DSM 23117 / BGSC 10A6 / LMG 26770 / FZB42) (Bacillus amyloliquefaciens subsp. plantarum)).